The following is a 349-amino-acid chain: Anthranilate phosphoribosyltransferase (349 aa).

Residues glycine 82, 85–86 (GD), 92–95 (NVST), 110–118 (KHGNRGVSS), and serine 122 each bind 5-phospho-alpha-D-ribose 1-diphosphate. Glycine 82 provides a ligand contact to anthranilate. Serine 94 is a Mg(2+) binding site. Anthranilate is bound at residue asparagine 113. Position 168 (arginine 168) interacts with anthranilate. Residues aspartate 227 and glutamate 228 each coordinate Mg(2+).

This sequence belongs to the anthranilate phosphoribosyltransferase family. In terms of assembly, homodimer. Mg(2+) serves as cofactor.

It catalyses the reaction N-(5-phospho-beta-D-ribosyl)anthranilate + diphosphate = 5-phospho-alpha-D-ribose 1-diphosphate + anthranilate. Its pathway is amino-acid biosynthesis; L-tryptophan biosynthesis; L-tryptophan from chorismate: step 2/5. Functionally, catalyzes the transfer of the phosphoribosyl group of 5-phosphorylribose-1-pyrophosphate (PRPP) to anthranilate to yield N-(5'-phosphoribosyl)-anthranilate (PRA). The protein is Anthranilate phosphoribosyltransferase of Acinetobacter baumannii (strain ATCC 17978 / DSM 105126 / CIP 53.77 / LMG 1025 / NCDC KC755 / 5377).